The chain runs to 381 residues: RING-H2 finger protein ATL1 (381 aa).

The segment at 1–31 (MDLTDRRNPFNNLVFPPPPPPPSTTFTSPIF) is disordered. A helical transmembrane segment spans residues 46-66 (IAVIGILATAFLLVSYYIFVI). An RING-type; atypical zinc finger spans residues 134 to 176 (CSVCLNEFQEDEKLRIIPNCCHVFHIDCIDIWLQGNANCPLCR). 2 disordered regions span residues 249 to 269 (TSNE…PIKF) and 334 to 354 (RQIP…GNSR). The segment covering 250–261 (SNEVSTGNSPKS) has biased composition (polar residues).

This sequence belongs to the RING-type zinc finger family. ATL subfamily.

The protein localises to the membrane. The catalysed reaction is S-ubiquitinyl-[E2 ubiquitin-conjugating enzyme]-L-cysteine + [acceptor protein]-L-lysine = [E2 ubiquitin-conjugating enzyme]-L-cysteine + N(6)-ubiquitinyl-[acceptor protein]-L-lysine.. It functions in the pathway protein modification; protein ubiquitination. The chain is RING-H2 finger protein ATL1 (ATL1) from Arabidopsis thaliana (Mouse-ear cress).